The sequence spans 162 residues: 2-C-methyl-D-erythritol 2,4-cyclodiphosphate synthase (162 aa).

The a divalent metal cation site is built by Asp12 and His14. 4-CDP-2-C-methyl-D-erythritol 2-phosphate-binding positions include 12–14 (DVH) and 38–39 (HS). Residue His46 coordinates a divalent metal cation. Residues 60-62 (DIG), 65-69 (FPDTD), and Arg146 each bind 4-CDP-2-C-methyl-D-erythritol 2-phosphate.

The protein belongs to the IspF family. Homotrimer. Requires a divalent metal cation as cofactor.

The enzyme catalyses 4-CDP-2-C-methyl-D-erythritol 2-phosphate = 2-C-methyl-D-erythritol 2,4-cyclic diphosphate + CMP. It functions in the pathway isoprenoid biosynthesis; isopentenyl diphosphate biosynthesis via DXP pathway; isopentenyl diphosphate from 1-deoxy-D-xylulose 5-phosphate: step 4/6. Its function is as follows. Involved in the biosynthesis of isopentenyl diphosphate (IPP) and dimethylallyl diphosphate (DMAPP), two major building blocks of isoprenoid compounds. Catalyzes the conversion of 4-diphosphocytidyl-2-C-methyl-D-erythritol 2-phosphate (CDP-ME2P) to 2-C-methyl-D-erythritol 2,4-cyclodiphosphate (ME-CPP) with a corresponding release of cytidine 5-monophosphate (CMP). This is 2-C-methyl-D-erythritol 2,4-cyclodiphosphate synthase from Bordetella bronchiseptica (strain ATCC BAA-588 / NCTC 13252 / RB50) (Alcaligenes bronchisepticus).